A 146-amino-acid chain; its full sequence is Phospholipase A2 147 (146 aa).

Residues 1-19 form the signal peptide; it reads MYPAHLLVLLAVCVSLLGA. A propeptide spanning residues 20–27 is cleaved from the precursor; that stretch reads ASVPPQPL. Cystine bridges form between cysteine 38-cysteine 98, cysteine 54-cysteine 145, cysteine 56-cysteine 72, cysteine 71-cysteine 126, cysteine 78-cysteine 119, cysteine 87-cysteine 112, and cysteine 105-cysteine 117. Residues tyrosine 55, glycine 57, and glycine 59 each contribute to the Ca(2+) site. The active site involves histidine 75. A Ca(2+)-binding site is contributed by aspartate 76. Aspartate 120 is an active-site residue.

It belongs to the phospholipase A2 family. Group I subfamily. D49 sub-subfamily. The cofactor is Ca(2+). As to expression, expressed by the venom gland.

The protein localises to the secreted. The catalysed reaction is a 1,2-diacyl-sn-glycero-3-phosphocholine + H2O = a 1-acyl-sn-glycero-3-phosphocholine + a fatty acid + H(+). Functionally, snake venom phospholipase A2 (PLA2) that inhibits collagen-induced platelet aggregation. PLA2 catalyzes the calcium-dependent hydrolysis of the 2-acyl groups in 3-sn-phosphoglycerides. The chain is Phospholipase A2 147 from Drysdalia coronoides (White-lipped snake).